The primary structure comprises 80 residues: Ubiquitin-like protein NEDD8-like protein 2 (80 aa).

This sequence belongs to the ubiquitin family.

The polypeptide is Ubiquitin-like protein NEDD8-like protein 2 (nedd8l2) (Dictyostelium discoideum (Social amoeba)).